The chain runs to 979 residues: Chromosome partition protein Smc (979 aa).

Residue 33 to 40 (PNGSGKSN) participates in ATP binding. The stretch at 169-400 (SKYKLDKEEA…INILKQQFEN (232 aa)) forms a coiled coil. Residues 419–538 (DGYIGLASEL…DNVDNANRIA (120 aa)) enclose the SMC hinge domain. Coiled-coil stretches lie at residues 572 to 716 (ILNY…HSDS) and 750 to 818 (SLDL…DKII).

This sequence belongs to the SMC family. Homodimer.

It localises to the cytoplasm. Required for chromosome condensation and partitioning. In Mesomycoplasma hyorhinis (Mycoplasma hyorhinis), this protein is Chromosome partition protein Smc.